Consider the following 307-residue polypeptide: Carbamate kinase (307 aa).

It belongs to the carbamate kinase family.

It localises to the cytoplasm. The enzyme catalyses hydrogencarbonate + NH4(+) + ATP = carbamoyl phosphate + ADP + H2O + H(+). It participates in metabolic intermediate metabolism; carbamoyl phosphate degradation; CO(2) and NH(3) from carbamoyl phosphate: step 1/1. Functionally, carbamate kinase involved in the arginine deiminase pathway of fermentative arginine utilization. This Halobacterium salinarum (strain ATCC 700922 / JCM 11081 / NRC-1) (Halobacterium halobium) protein is Carbamate kinase (arcC).